The primary structure comprises 1150 residues: ATP-dependent helicase/deoxyribonuclease subunit B (1150 aa).

Residue 8–15 (GRSGSGKS) participates in ATP binding. Residues Cys789, Cys1108, Cys1111, and Cys1117 each coordinate [4Fe-4S] cluster.

The protein belongs to the helicase family. AddB/RexB type 1 subfamily. In terms of assembly, heterodimer of AddA and AddB. Requires Mg(2+) as cofactor. [4Fe-4S] cluster serves as cofactor.

In terms of biological role, the heterodimer acts as both an ATP-dependent DNA helicase and an ATP-dependent, dual-direction single-stranded exonuclease. Recognizes the chi site generating a DNA molecule suitable for the initiation of homologous recombination. The AddB subunit has 5' -&gt; 3' nuclease activity but not helicase activity. The protein is ATP-dependent helicase/deoxyribonuclease subunit B of Clostridium tetani (strain Massachusetts / E88).